The primary structure comprises 590 residues: UvrABC system protein C (590 aa).

The GIY-YIG domain maps to 14 to 91; sequence DQPGCYLMKD…IKKYDPKYNV (78 aa). Residues 196–231 form the UVR domain; sequence NEVKKELEAKMLEASENLQFERAKEFRDQIAHIEST.

This sequence belongs to the UvrC family. In terms of assembly, interacts with UvrB in an incision complex.

The protein resides in the cytoplasm. The UvrABC repair system catalyzes the recognition and processing of DNA lesions. UvrC both incises the 5' and 3' sides of the lesion. The N-terminal half is responsible for the 3' incision and the C-terminal half is responsible for the 5' incision. The sequence is that of UvrABC system protein C from Bacillus licheniformis (strain ATCC 14580 / DSM 13 / JCM 2505 / CCUG 7422 / NBRC 12200 / NCIMB 9375 / NCTC 10341 / NRRL NRS-1264 / Gibson 46).